The primary structure comprises 534 residues: Prolyl 4-hydroxylase subunit alpha-2 (534 aa).

The N-terminal stretch at 1–21 (MKPWLCLVFFTSAFLIWHAEA) is a signal peptide. The N-linked (GlcNAc...) asparagine glycan is linked to Asn115. One copy of the TPR repeat lies at 207 to 240 (VEILDYLSYAVFQFGDLHRAMELTRRLISLDSTH). An N-linked (GlcNAc...) asparagine glycan is attached at Asn263. The Fe2OG dioxygenase domain occupies 413–519 (TAELLQVANY…KWVSNKWFHE (107 aa)). Fe cation contacts are provided by His431, Asp433, and His500. Position 510 (Lys510) interacts with 2-oxoglutarate.

Belongs to the P4HA family. In terms of assembly, heterotetramer of two alpha-2 chains and two beta chains (the beta chain is the multi-functional PDI). It depends on Fe(2+) as a cofactor. L-ascorbate is required as a cofactor.

It is found in the endoplasmic reticulum lumen. It carries out the reaction L-prolyl-[collagen] + 2-oxoglutarate + O2 = trans-4-hydroxy-L-prolyl-[collagen] + succinate + CO2. In terms of biological role, catalyzes the post-translational formation of 4-hydroxyproline in -Xaa-Pro-Gly- sequences in collagens and other proteins. The sequence is that of Prolyl 4-hydroxylase subunit alpha-2 (P4HA2) from Gallus gallus (Chicken).